Consider the following 195-residue polypeptide: Guanylate kinase (195 aa).

The Guanylate kinase-like domain maps to 10–189 (GRLIVFSAPS…TVDAVATRIA (180 aa)). Residue 17 to 24 (APSGTGKS) participates in ATP binding.

The protein belongs to the guanylate kinase family.

It localises to the cytoplasm. It catalyses the reaction GMP + ATP = GDP + ADP. Its function is as follows. Essential for recycling GMP and indirectly, cGMP. The chain is Guanylate kinase from Chlorobaculum tepidum (strain ATCC 49652 / DSM 12025 / NBRC 103806 / TLS) (Chlorobium tepidum).